A 59-amino-acid polypeptide reads, in one-letter code: uncharacterized protein (59 aa).

Residue 33–40 (GRRRVGKT) coordinates ATP.

This is an uncharacterized protein from Methanocaldococcus jannaschii (strain ATCC 43067 / DSM 2661 / JAL-1 / JCM 10045 / NBRC 100440) (Methanococcus jannaschii).